Here is a 170-residue protein sequence, read N- to C-terminus: Adenine phosphoribosyltransferase (170 aa).

This sequence belongs to the purine/pyrimidine phosphoribosyltransferase family. Homodimer.

It is found in the cytoplasm. The catalysed reaction is AMP + diphosphate = 5-phospho-alpha-D-ribose 1-diphosphate + adenine. It functions in the pathway purine metabolism; AMP biosynthesis via salvage pathway; AMP from adenine: step 1/1. Functionally, catalyzes a salvage reaction resulting in the formation of AMP, that is energically less costly than de novo synthesis. This chain is Adenine phosphoribosyltransferase, found in Brevibacillus brevis (strain 47 / JCM 6285 / NBRC 100599).